Reading from the N-terminus, the 842-residue chain is Protein translocase subunit SecA (842 aa).

ATP contacts are provided by residues Gln85, 103 to 107, and Asp493; that span reads GEGKT. Zn(2+) contacts are provided by Cys825, Cys827, Cys836, and His837.

Belongs to the SecA family. As to quaternary structure, monomer and homodimer. Part of the essential Sec protein translocation apparatus which comprises SecA, SecYEG and auxiliary proteins SecDF. Other proteins may also be involved. Requires Zn(2+) as cofactor.

It is found in the cell membrane. The protein resides in the cytoplasm. It catalyses the reaction ATP + H2O + cellular proteinSide 1 = ADP + phosphate + cellular proteinSide 2.. Its function is as follows. Part of the Sec protein translocase complex. Interacts with the SecYEG preprotein conducting channel. Has a central role in coupling the hydrolysis of ATP to the transfer of proteins into and across the cell membrane, serving as an ATP-driven molecular motor driving the stepwise translocation of polypeptide chains across the membrane. The polypeptide is Protein translocase subunit SecA (Streptococcus equi subsp. zooepidemicus (strain H70)).